The primary structure comprises 575 residues: Probable methionine--tRNA ligase, mitochondrial (575 aa).

The 'HIGH' region motif lies at 52–62; sequence FYVNGPPHIGH. Positions 352-356 match the 'KMSKS' region motif; the sequence is KMSKS. Lysine 355 provides a ligand contact to ATP.

The protein belongs to the class-I aminoacyl-tRNA synthetase family.

The protein localises to the mitochondrion matrix. It carries out the reaction tRNA(Met) + L-methionine + ATP = L-methionyl-tRNA(Met) + AMP + diphosphate. The polypeptide is Probable methionine--tRNA ligase, mitochondrial (mmetS) (Dictyostelium discoideum (Social amoeba)).